The chain runs to 456 residues: Enolase (456 aa).

A (2R)-2-phosphoglycerate-binding site is contributed by Gln-164. The active-site Proton donor is the Glu-207. The Mg(2+) site is built by Asp-244, Glu-287, and Asp-314. Lys-339, Arg-368, Ser-369, and Lys-390 together coordinate (2R)-2-phosphoglycerate. Lys-339 serves as the catalytic Proton acceptor.

It belongs to the enolase family. In terms of assembly, component of the RNA degradosome, a multiprotein complex involved in RNA processing and mRNA degradation. Requires Mg(2+) as cofactor.

The protein localises to the cytoplasm. The protein resides in the secreted. It is found in the cell surface. It carries out the reaction (2R)-2-phosphoglycerate = phosphoenolpyruvate + H2O. The protein operates within carbohydrate degradation; glycolysis; pyruvate from D-glyceraldehyde 3-phosphate: step 4/5. Its function is as follows. Catalyzes the reversible conversion of 2-phosphoglycerate (2-PG) into phosphoenolpyruvate (PEP). It is essential for the degradation of carbohydrates via glycolysis. The sequence is that of Enolase from Francisella tularensis subsp. holarctica (strain OSU18).